A 204-amino-acid chain; its full sequence is Large ribosomal subunit protein uL4 (204 aa).

Residues 49–75 are disordered; it reads TKGRSDVSGGGKKPWRQKGRGGARAGS.

Belongs to the universal ribosomal protein uL4 family. In terms of assembly, part of the 50S ribosomal subunit.

One of the primary rRNA binding proteins, this protein initially binds near the 5'-end of the 23S rRNA. It is important during the early stages of 50S assembly. It makes multiple contacts with different domains of the 23S rRNA in the assembled 50S subunit and ribosome. Its function is as follows. Forms part of the polypeptide exit tunnel. In Campylobacter jejuni (strain RM1221), this protein is Large ribosomal subunit protein uL4.